Consider the following 862-residue polypeptide: Molybdenum cofactor sulfurase (862 aa).

The residue at position 34 (Ser-34) is a Phosphoserine. At Lys-264 the chain carries N6-(pyridoxal phosphate)lysine. Cys-424 is a catalytic residue. Ser-517 is subject to Phosphoserine. An MOSC domain is found at 704–855; it reads RKTPKKGQPP…LSVGSEVLPV (152 aa).

The protein belongs to the class-V pyridoxal-phosphate-dependent aminotransferase family. MOCOS subfamily. The cofactor is pyridoxal 5'-phosphate.

The enzyme catalyses Mo-molybdopterin + L-cysteine + AH2 = thio-Mo-molybdopterin + L-alanine + A + H2O. It participates in cofactor biosynthesis; molybdopterin biosynthesis. Its function is as follows. Sulfurates the molybdenum cofactor. Sulfation of molybdenum is essential for xanthine dehydrogenase (XDH) and aldehyde oxidase (ADO) enzymes in which molybdenum cofactor is liganded by 1 oxygen and 1 sulfur atom in active form. This chain is Molybdenum cofactor sulfurase (Mocos), found in Mus musculus (Mouse).